The chain runs to 243 residues: Triosephosphate isomerase (243 aa).

Residue N9–K11 coordinates substrate. H96 (electrophile) is an active-site residue. E165 acts as the Proton acceptor in catalysis. Residues G171, S204, and G225–G226 contribute to the substrate site.

It belongs to the triosephosphate isomerase family. In terms of assembly, homodimer.

It is found in the cytoplasm. It carries out the reaction D-glyceraldehyde 3-phosphate = dihydroxyacetone phosphate. The protein operates within carbohydrate biosynthesis; gluconeogenesis. Its pathway is carbohydrate degradation; glycolysis; D-glyceraldehyde 3-phosphate from glycerone phosphate: step 1/1. In terms of biological role, involved in the gluconeogenesis. Catalyzes stereospecifically the conversion of dihydroxyacetone phosphate (DHAP) to D-glyceraldehyde-3-phosphate (G3P). In Synechococcus sp. (strain WH7803), this protein is Triosephosphate isomerase.